The sequence spans 313 residues: tRNA dimethylallyltransferase (313 aa).

An ATP-binding site is contributed by Gly9 to Thr16. Thr11–Thr16 is a binding site for substrate. An interaction with substrate tRNA region spans residues Asp34 to Gln37.

This sequence belongs to the IPP transferase family. Monomer. The cofactor is Mg(2+).

The enzyme catalyses adenosine(37) in tRNA + dimethylallyl diphosphate = N(6)-dimethylallyladenosine(37) in tRNA + diphosphate. In terms of biological role, catalyzes the transfer of a dimethylallyl group onto the adenine at position 37 in tRNAs that read codons beginning with uridine, leading to the formation of N6-(dimethylallyl)adenosine (i(6)A). This chain is tRNA dimethylallyltransferase, found in Lachnoclostridium phytofermentans (strain ATCC 700394 / DSM 18823 / ISDg) (Clostridium phytofermentans).